We begin with the raw amino-acid sequence, 552 residues long: Putative transport protein NT01EI_3867 (552 aa).

A run of 5 helical transmembrane segments spans residues 4–24, 26–46, 65–85, 90–112, and 158–178; these read IALT…IGNW, IYGV…VGHF, FGLI…FFSS, GLRL…AAIH, and MGYA…IWLI. 2 consecutive RCK C-terminal domains span residues 191–276 and 279–361; these read RDFD…VIGE and DTSL…IVGN. Transmembrane regions (helical) follow at residues 371–391, 403–425, 439–459, 464–484, 493–513, and 530–550; these read MLPV…PLFI, AGGP…LYWF, IVLF…DTLL, VTWI…AALL, YLTL…LAFA, and VYPL…LLFW.

It belongs to the AAE transporter (TC 2.A.81) family. YidE subfamily.

It is found in the cell membrane. The protein is Putative transport protein NT01EI_3867 of Edwardsiella ictaluri (strain 93-146).